A 166-amino-acid chain; its full sequence is Phospholipase A2 inhibitor clone 08 (166 aa).

The N-terminal stretch at 1–19 is a signal peptide; sequence MRLILLSSLLLLGIFLANG. The C-type lectin domain occupies 46–161; that stretch reads LKGAFLTVHR…CDDNLLVVCE (116 aa). 2 disulfide bridges follow: cysteine 83/cysteine 160 and cysteine 138/cysteine 152. An N-linked (GlcNAc...) asparagine glycan is attached at asparagine 122.

Belongs to the alpha-type phospholipase A2 inhibitor family. Homotrimer; non-covalently linked. In terms of tissue distribution, expressed by the liver.

The protein resides in the secreted. Its function is as follows. This phospholipase A2 inhibitor binds directly phospholipase A2 in the presence or absence of calcium. This is Phospholipase A2 inhibitor clone 08 from Bothrops moojeni (Lance-headed viper).